The following is a 298-amino-acid chain: N-acetylmuramic acid 6-phosphate etherase (298 aa).

The region spanning 55 to 218 (IHAQVSGGGR…STGLMIKSGK (164 aa)) is the SIS domain. Residue Glu83 is the Proton donor of the active site. Glu114 is a catalytic residue.

It belongs to the GCKR-like family. MurNAc-6-P etherase subfamily. Homodimer.

The enzyme catalyses N-acetyl-D-muramate 6-phosphate + H2O = N-acetyl-D-glucosamine 6-phosphate + (R)-lactate. The protein operates within amino-sugar metabolism; 1,6-anhydro-N-acetylmuramate degradation. It functions in the pathway amino-sugar metabolism; N-acetylmuramate degradation. Its pathway is cell wall biogenesis; peptidoglycan recycling. Functionally, specifically catalyzes the cleavage of the D-lactyl ether substituent of MurNAc 6-phosphate, producing GlcNAc 6-phosphate and D-lactate. Together with AnmK, is also required for the utilization of anhydro-N-acetylmuramic acid (anhMurNAc) either imported from the medium or derived from its own cell wall murein, and thus plays a role in cell wall recycling. The polypeptide is N-acetylmuramic acid 6-phosphate etherase (Escherichia coli (strain SMS-3-5 / SECEC)).